The following is a 241-amino-acid chain: Tetrahydromethanopterin S-methyltransferase subunit A (241 aa).

The Cytoplasmic portion of the chain corresponds to 1–220; it reads MAEKKEPAEG…HSGVLAGKIE (220 aa). Residue H85 coordinates 5-hydroxybenzimidazolylcob(I)amide. A helical transmembrane segment spans residues 221-241; that stretch reads GIMVGLVLSLFVLGLLLFGGM.

The protein belongs to the MtrA family. The complex is composed of 8 subunits; MtrA, MtrB, MtrC, MtrD, MtrE, MtrF, MtrG and MtrH. 5-hydroxybenzimidazolylcob(I)amide is required as a cofactor.

It localises to the cell membrane. It carries out the reaction 5-methyl-5,6,7,8-tetrahydromethanopterin + coenzyme M + 2 Na(+)(in) = 5,6,7,8-tetrahydromethanopterin + methyl-coenzyme M + 2 Na(+)(out). It participates in one-carbon metabolism; methanogenesis from CO(2); methyl-coenzyme M from 5,10-methylene-5,6,7,8-tetrahydromethanopterin: step 2/2. Part of a complex that catalyzes the formation of methyl-coenzyme M and tetrahydromethanopterin from coenzyme M and methyl-tetrahydromethanopterin. This is an energy-conserving, sodium-ion translocating step. The protein is Tetrahydromethanopterin S-methyltransferase subunit A of Methanohalobium evestigatum (strain ATCC BAA-1072 / DSM 3721 / NBRC 107634 / OCM 161 / Z-7303).